A 474-amino-acid chain; its full sequence is MPREIITLQVGQCGNQIGMEFWKQLCLEHGISKDGILEDFATQGGDRKDVFFYQADDQHYIPRALLIDLEPRVINGIQNGEYRNLYNHENIFLSDHGGGAGNNWASGYHQGKGVEEEIMDMIDREADGSDSLEGFVLCHSIAGGTGSGMGSYLLETLNDRYSKKLVQTYSVFPNQMETSDVVVQPYNSLLTLKRLTLNADCVVVLDNTALNRIAVERLHLTNPTFAQTNSLVSTVMSASTTTLRYPGYMNNDLVGLLASLIPTPRCHFLMTGYTPLTVERQANVIRKTTVLDVMRRLLQTKNIMVSSYARNKEASQAKYISILNIIQGEVDPTQVHESLQRIRERKLVNFIDWGPASIQVALSKKSPYVQTSHRVSGLMLASHTSIRHLFSRCLSQYDKLRKKQAFLDNYRKFPMFADNDLSEFDESRDIIESLVDEYKACESPDYIKWGMEDPGQLMTGEGNASGVADPKLAF.

Position 142–148 (142–148 (AGGTGSG)) interacts with GTP.

This sequence belongs to the tubulin family. Gamma-tubulin complex is composed of gamma-tubulin and GCP proteins.

The protein localises to the cytoplasm. It localises to the cytoskeleton. It is found in the microtubule organizing center. Its subcellular location is the nucleus. The protein resides in the cell cortex. Functionally, tubulin is the major constituent of microtubules. The gamma chain is found at microtubule organizing centers (MTOC) such as the spindle poles, suggesting that it is involved in the minus-end nucleation of microtubule assembly. In terms of biological role, gamma-tubulin complex is essential for the control of microtubular network remodeling in the course of initiation and development of giant-feeding cells, and for the successful reproduction of nematodes (e.g. Meloidogyne spp.) in their plant hosts. This is Tubulin gamma-2 chain (TUBG2) from Arabidopsis thaliana (Mouse-ear cress).